The primary structure comprises 5088 residues: Replicase polyprotein 1ab (5088 aa).

Residues 26-46 (VTNVIQYWTPILTMLLLAIYI) traverse the membrane as a helical segment. A disordered region spans residues 301 to 323 (EIEDDTEAEETQKTKRKGKLQPQ). The next 5 membrane-spanning stretches (helical) occupy residues 343–363 (HLTF…MSPT), 1132–1152 (GLFL…AITI), 1156–1176 (TMMM…HLLL), 1201–1221 (YGCL…LAYI), and 1250–1270 (ILIP…VSYV). Catalysis depends on for 3C-like proteinase residues His1434 and Cys1539. 2 consecutive transmembrane segments (helical) span residues 1729–1749 (FTHT…LFFV) and 1758–1778 (ILSS…YGLV). The segment at 3093–3112 (KPNCPMVPSEVPVRNKHKSA) is disordered. The ExoN domain maps to 4351-4616 (MNIVMDDCIC…MTQCIYQSFV (266 aa)). Catalysis depends on residues Asp4362, Glu4364, and Asp4481. Cys4498, Cys4504, Cys4522, and His4525 together coordinate Zn(2+). Residues His4599, Asp4604, Lys4880, Asp4969, Lys4998, and Glu5035 contribute to the active site. In terms of domain architecture, Nidovirus-type SAM-dependent 2'-O-MTase spans 4844–5088 (LNNHAALAKA…RQSVFRYSPK (245 aa)).

Homodimer. In terms of processing, specific enzymatic cleavages in vivo by its own protease yield mature proteins. 3CL-PRO is autocatalytically processed.

Its subcellular location is the membrane. The catalysed reaction is a 5'-end (5'-triphosphoguanosine)-ribonucleoside in mRNA + S-adenosyl-L-methionine = a 5'-end (N(7)-methyl 5'-triphosphoguanosine)-ribonucleoside in mRNA + S-adenosyl-L-homocysteine. It carries out the reaction RNA(n) + a ribonucleoside 5'-triphosphate = RNA(n+1) + diphosphate. It catalyses the reaction ATP + H2O = ADP + phosphate + H(+). The enzyme catalyses a 5'-end (N(7)-methyl 5'-triphosphoguanosine)-ribonucleoside in mRNA + S-adenosyl-L-methionine = a 5'-end (N(7)-methyl 5'-triphosphoguanosine)-(2'-O-methyl-ribonucleoside) in mRNA + S-adenosyl-L-homocysteine + H(+). Functionally, cysteine protease responsible for the majority of cleavages of the polyprotein. Recognizes substrates containing the core sequence [NT]-[EHKQSY]-|-[AGNST]. The helicase which contains a zinc finger structure displays RNA and DNA duplex-unwinding activities with 5' to 3' polarity. Its function is as follows. RNA-directed RNA polymerase that catalyzes the transcription of viral genomic and subgenomic RNAs. In terms of biological role, catalyzes the RNA N7-guanylyltransferase reaction to methylate the core cap structure GpppN-RNA into the type-0 cap (m)GpppN-RNA. In Ochlerotatus harrisoni (CAVV), this protein is Replicase polyprotein 1ab.